The chain runs to 205 residues: uncharacterized protein (205 aa).

The interval 1 to 42 is disordered; it reads MSRKRDKPYTNRHTPARISKRRRPWAPSSSEHDEIIDKPITK. The segment covering 14-24 has biased composition (basic residues); that stretch reads TPARISKRRRP. A compositionally biased stretch (basic and acidic residues) spans 30 to 40; it reads SEHDEIIDKPI. Residues 47-122 form the RRM domain; it reads PALVVMGLPA…KKLEVVWATD (76 aa). The segment at 170 to 191 is disordered; that stretch reads PRSDNTKGISGDGGISSPATTS.

This is an uncharacterized protein from Arabidopsis thaliana (Mouse-ear cress).